A 24-amino-acid chain; its full sequence is Brevinin-1SPa (24 aa).

A disulfide bridge links cysteine 18 with cysteine 24.

In terms of tissue distribution, expressed by the skin glands.

It localises to the secreted. Functionally, antimicrobial peptide with activity against Gram-negative and Gram-positive bacteria (MIC=13 uM against E.coli, MIC=3 uM against S.aureus) and fungi (MIC=6 uM against C.albicans). Shows hemolytic activity on human erythrocytes (HC(50)=7 uM). The protein is Brevinin-1SPa of Lithobates septentrionalis (Mink frog).